The primary structure comprises 375 residues: MLVIPPGLSEEEEALQKKFNKLKKKKKALLALKKQSSSGPASQGGVKRSLSEQPVVDTATATEQAKQLVKSGAISAIKAETKNSGFKRSRTLEGKLKDPEKGPVPTFQPFQRSMSADEDLQEPSRRPQRKSLYESFVSSSDRLRELGQDGEEAEAPGAGDGPPRGFDWSYEEHGSARSSASPPRSRSRDRSHDRSRDRDRDKERDRDRDRDRDRDRDKDKDRDRDRDRDKERDRDRDRDRDRERDREGPFRRSDSFPERRAPRKGNTLYVYGEDMTPTLLRGAFSPFGNIIDLSMDPPRNCAFVTYEKMESADQAVAELNGTQVESVQLKVNIARKQPMLDAATGKSVWGSLAVQNSPKGCHRDKRTQIVYSDDL.

A coiled-coil region spans residues 7 to 36 (GLSEEEEALQKKFNKLKKKKKALLALKKQS). The disordered stretch occupies residues 30–58 (LALKKQSSSGPASQGGVKRSLSEQPVVDT). The residue at position 51 (Ser-51) is a Phosphoserine. Lys-78 is covalently cross-linked (Glycyl lysine isopeptide (Lys-Gly) (interchain with G-Cter in SUMO1); alternate). Lys-78 participates in a covalent cross-link: Glycyl lysine isopeptide (Lys-Gly) (interchain with G-Cter in SUMO2); alternate. The segment at 79–262 (AETKNSGFKR…SDSFPERRAP (184 aa)) is disordered. A Glycyl lysine isopeptide (Lys-Gly) (interchain with G-Cter in SUMO2) cross-link involves residue Lys-82. The segment covering 90-101 (RTLEGKLKDPEK) has biased composition (basic and acidic residues). Phosphoserine is present on residues Ser-113 and Ser-115. PolyADP-ribosyl glutamic acid is present on Glu-122. Residues Ser-131 and Ser-139 each carry the phosphoserine modification. Glu-151 is modified (polyADP-ribosyl glutamic acid). The segment covering 155-167 (APGAGDGPPRGFD) has biased composition (low complexity). Position 172 is a polyADP-ribosyl glutamic acid (Glu-172). Residues Ser-179, Ser-181, Ser-185, and Ser-187 each carry the phosphoserine modification. Tandem repeats lie at residues 184–185 (RS), 186–187 (RS), 188–189 (RD), and 190–191 (RS). The segment at 184–247 (RSRSRDRSHD…RDRDRERDRE (64 aa)) is 32 X 2 AA approximate tandem repeats of R-[DSE]. Residues 186–260 (RSRDRSHDRS…RRSDSFPERR (75 aa)) show a composition bias toward basic and acidic residues. Position 191 is a phosphoserine (Ser-191). A 5; approximate repeat occupies 192-193 (HD). 4 repeat units span residues 194 to 195 (RS), 196 to 197 (RD), 198 to 199 (RD), and 200 to 201 (RD). A 10; approximate repeat occupies 202–203 (KE). A run of 7 repeats spans residues 204–205 (RD), 206–207 (RD), 208–209 (RD), 210–211 (RD), 212–213 (RD), 214–215 (RD), and 216–217 (RD). An 18; approximate repeat occupies 218 to 219 (KD). The 19; approximate repeat unit spans residues 220-221 (KD). A run of 4 repeats spans residues 222–223 (RD), 224–225 (RD), 226–227 (RD), and 228–229 (RD). The 24; approximate repeat unit spans residues 230 to 231 (KE). A run of 8 repeats spans residues 232–233 (RD), 234–235 (RD), 236–237 (RD), 238–239 (RD), 240–241 (RD), 242–243 (RE), 244–245 (RD), and 246–247 (RE). Ser-253 and Ser-255 each carry phosphoserine. In terms of domain architecture, RRM spans 266-336 (NTLYVYGEDM…VQLKVNIARK (71 aa)). 2 positions are modified to phosphothreonine: Thr-276 and Thr-278. 2 positions are modified to phosphoserine: Ser-285 and Ser-357.

Belongs to the RRM NELF-E family. In terms of assembly, the NELF complex is composed of NELFA, NELFB, NELFCD and NELFE. Interacts with NELFB. In terms of processing, phosphorylated by the P-TEFb complex at sites next to its RNA recognition motif, promoting its release from chromatin. Post-translationally, sumoylated. Poly-ADP-ribosylated by PARP1, thereby preventing RNA-binding and relieving transcription pausing.

The protein localises to the nucleus. It is found in the chromosome. Its function is as follows. Essential component of the NELF complex, a complex that negatively regulates the elongation of transcription by RNA polymerase II. The NELF complex, which acts via an association with the DSIF complex and causes transcriptional pausing, is counteracted by the P-TEFb kinase complex. Provides the strongest RNA binding activity of the NELF complex and may initially recruit the NELF complex to RNA. This is Negative elongation factor E (Nelfe) from Mus musculus (Mouse).